Consider the following 241-residue polypeptide: Adapter protein MecA (241 aa).

The interval 115–141 (TDSNDKNNDDSSYMSDGNPADLNGYAN) is disordered.

The protein belongs to the MecA family. As to quaternary structure, homodimer.

Functionally, enables the recognition and targeting of unfolded and aggregated proteins to the ClpC protease or to other proteins involved in proteolysis. The sequence is that of Adapter protein MecA from Pediococcus pentosaceus (strain ATCC 25745 / CCUG 21536 / LMG 10740 / 183-1w).